The primary structure comprises 434 residues: Beta-phenylalanine transaminase (434 aa).

Arginine 41 lines the (S)-3-amino-3-phenylpropanoate pocket. 132 to 133 (GT) contributes to the pyridoxal 5'-phosphate binding site. An N6-(pyridoxal phosphate)lysine modification is found at lysine 267. Threonine 300 serves as a coordination point for pyridoxal 5'-phosphate.

It belongs to the class-III pyridoxal-phosphate-dependent aminotransferase family. Homodimer. Requires pyridoxal 5'-phosphate as cofactor.

The enzyme catalyses (S)-3-amino-3-phenylpropanoate + 2-oxoglutarate = 3-oxo-3-phenylpropanoate + L-glutamate. It carries out the reaction (S)-3-amino-3-phenylpropanoate + pyruvate = 3-oxo-3-phenylpropanoate + L-alanine. Is inhibited by 2-aminooxyacetate (AOA), a mimic of beta-alanine and a known inhibitor of aminotransferases. Its function is as follows. Aminotransferase that acts exclusively on beta-amino acids and exhibits a broad substrate range in vitro, accepting meta-, para- and, to a lesser extent, ortho-substituted beta-phenylalanine derivatives as amino donors, and 2-oxoglutarate or pyruvate as amino acceptors. Is highly enantioselective toward (S)-beta-phenylalanine (is not active with (R)-beta-phenylalanine) and derivatives with different substituents on the phenyl ring, allowing the kinetic resolution of various racemic beta-amino acids to yield (R)-beta-amino acids with &gt;95% enantiomeric excess (ee). Highly prefers aromatic beta-amino acids over aliphatic beta-amino acids; cannot use beta-alanine or beta-glutamate as substrate. Is likely involved in the beta-phenylalanine degradation pathway that allows V.paradoxus strain CBF3 to use beta-phenylalanine as a sole nitrogen source. This chain is Beta-phenylalanine transaminase, found in Variovorax paradoxus.